The following is a 329-amino-acid chain: DNA-directed RNA polymerase subunit alpha (329 aa).

Positions 1–233 (MVREKVKVST…NLFIPFLHVE (233 aa)) are alpha N-terminal domain (alpha-NTD). An alpha C-terminal domain (alpha-CTD) region spans residues 266-329 (TKELAFQYIF…KKILDILEKK (64 aa)).

It belongs to the RNA polymerase alpha chain family. As to quaternary structure, in plastids the minimal PEP RNA polymerase catalytic core is composed of four subunits: alpha, beta, beta', and beta''. When a (nuclear-encoded) sigma factor is associated with the core the holoenzyme is formed, which can initiate transcription.

Its subcellular location is the plastid. It localises to the chloroplast. It catalyses the reaction RNA(n) + a ribonucleoside 5'-triphosphate = RNA(n+1) + diphosphate. DNA-dependent RNA polymerase catalyzes the transcription of DNA into RNA using the four ribonucleoside triphosphates as substrates. This is DNA-directed RNA polymerase subunit alpha from Arabidopsis thaliana (Mouse-ear cress).